The following is a 438-amino-acid chain: Putative F-box/FBD/LRR-repeat protein At5g44950 (438 aa).

In terms of domain architecture, F-box spans 3 to 49; that stretch reads RDRISELPDGLLNHILMYLHIEESIRTSVLSSRWRKLWLKVPGLDVN. LRR repeat units follow at residues 246 to 275 and 286 to 310; these read LSSL…DLTK and ISSV…KIGQ. Positions 355–407 constitute an FBD domain; it reads PEQIDFTNLPRCLISTLEYVEIKQLTMREESGIKLVKYFLENSAVLKKLTLSF.

This chain is Putative F-box/FBD/LRR-repeat protein At5g44950, found in Arabidopsis thaliana (Mouse-ear cress).